We begin with the raw amino-acid sequence, 315 residues long: Serine/threonine-protein phosphatase PP2A catalytic subunit 2 (315 aa).

Mn(2+)-binding residues include aspartate 62, histidine 64, aspartate 90, and asparagine 122. Catalysis depends on histidine 123, which acts as the Proton donor. Mn(2+) contacts are provided by histidine 172 and histidine 247. The segment at 294–315 (QFEPAPRENEPHTTRRVPDYFL) is disordered. Residues 298 to 315 (APRENEPHTTRRVPDYFL) show a composition bias toward basic and acidic residues. The residue at position 315 (leucine 315) is a Leucine methyl ester.

This sequence belongs to the PPP phosphatase family. PP-2A subfamily. Requires Mn(2+) as cofactor. In terms of processing, reversibly methyl esterified on Leu-315 by leucine carboxyl methyltransferase 1 (PPM1) and protein phosphatase methylesterase 1 (PPE1). Carboxyl methylation influences the affinity of the catalytic subunit for the different regulatory subunits, thereby modulating the PP2A holoenzyme's substrate specificity, enzyme activity and cellular localization.

It catalyses the reaction O-phospho-L-seryl-[protein] + H2O = L-seryl-[protein] + phosphate. The enzyme catalyses O-phospho-L-threonyl-[protein] + H2O = L-threonyl-[protein] + phosphate. The polypeptide is Serine/threonine-protein phosphatase PP2A catalytic subunit 2 (Ppn2) (Paramecium tetraurelia).